The following is a 356-amino-acid chain: MPTTIQAISAEAINLPLTEPFAIASGAQAVAANVLVKVQLADGTLGLGEAAPFPAVSGETQTGTSAAIERLQSHLLGADVRGWRKLAAMLDHAEHEAAAARCGLEMAMLDALTRHYHMPLHVFFGGVSKQLETDMTITAGDEVHAAASAKAILARGIKSIKVKTAGVDVAYDLARLRAIHQAAPTAPLIVDGNCGYDVERALAFCAACKAESIPMVLFEQPLPREDWAGMAQVTAQSGFAVAADESARSAHDVLRIAREGTASVINIKLMKAGVAEGLKMIAIAQAAGLGLMIGGMVESILAMSFSANLAAGNGGFDFIDLDTPLFIAEHPFIGGFAQTGGTLQLADVAGHGVNLA.

Residues T136 and 161–163 (KVK) each bind substrate. Residues D191, E219, and D244 each coordinate Mg(2+). Substrate is bound by residues K268 and 320–322 (DLD).

It belongs to the mandelate racemase/muconate lactonizing enzyme family. Requires Mg(2+) as cofactor.

Has epimerase activity with a variety of hydrophobic dipeptides (in vitro). Enzyme activity is highest with L-Phe-L-Tyr, but is still relatively low, suggesting that L-Phe-L-Tyr is not the physiological substrate. In Herpetosiphon aurantiacus (strain ATCC 23779 / DSM 785 / 114-95), this protein is Aromatic dipeptide epimerase.